The following is a 435-amino-acid chain: MSDFSPREIVSELDRHIVGQANAKRAVAIALRNRWRRQQLDDKLREEVLPKNILMIGPTGVGKTEISRRLARLAGAPFLKVEATKFTEVGYVGRDVEQIVRDLVEVGIGLVREARRKDVQAKAHLAAENRVLDALVGATASPATRDAFRKRLRAGELDDKEVEIEVQAGGQGMPMFEIPGMPGTQMGAVNLGDMLGKAFGGRSKPRRVNVKEAHPLLLAEEADKLIDQDAIVQDAIHQVENNGIVFLDEIDKIAGREGRSGADVSREGVQRDLLPLIEGTTVSTKHGPVKTDHILFIASGAFHVSKPSDLLPELQGRLPIRVELEALTRADFVRILTETEASLVKQSVALMGTEGVTLTITTDAVEAIADAAVEVNSNVENIGARRLQTVIERVLDDLSFSAPDRSGETVVVDAEYVRSRVADLARNADLSRFIL.

ATP-binding positions include Val18, 60–65, Asp248, Glu313, and Arg385; that span reads GVGKTE.

This sequence belongs to the ClpX chaperone family. HslU subfamily. As to quaternary structure, a double ring-shaped homohexamer of HslV is capped on each side by a ring-shaped HslU homohexamer. The assembly of the HslU/HslV complex is dependent on binding of ATP.

Its subcellular location is the cytoplasm. Its function is as follows. ATPase subunit of a proteasome-like degradation complex; this subunit has chaperone activity. The binding of ATP and its subsequent hydrolysis by HslU are essential for unfolding of protein substrates subsequently hydrolyzed by HslV. HslU recognizes the N-terminal part of its protein substrates and unfolds these before they are guided to HslV for hydrolysis. In Xanthobacter autotrophicus (strain ATCC BAA-1158 / Py2), this protein is ATP-dependent protease ATPase subunit HslU.